The following is a 688-amino-acid chain: T-box transcription factor TBX2-A (688 aa).

Positions 104-277 (LWDQFHKIGT…NNPFAKGFRD (174 aa)) form a DNA-binding region, T-box. Disordered regions lie at residues 301-436 (CKAD…GSLS) and 606-688 (PSTN…ETPK). 3 stretches are compositionally biased toward basic and acidic residues: residues 340 to 361 (NNRE…EIRS), 378 to 403 (RLED…KDGS), and 412 to 430 (SLEK…KSDP). Residues 621–636 (PGSESSKPGSSRESSP) show a composition bias toward low complexity. Residues 655 to 679 (ASMKDSINELQNIQRLVSGLESQRE) adopt a coiled-coil conformation. Residues 676–688 (SQREISPGRETPK) show a composition bias toward basic and acidic residues.

As to quaternary structure, binds DNA as a monomer.

Its subcellular location is the nucleus. Transcription factor which acts as a transcriptional repressor. May also function as a transcriptional activator. Binds to the palindromic T site 5'-TTCACACCTAGGTGTGAA-3' DNA sequence, or a half-site, which are present in the regulatory region of several genes. The polypeptide is T-box transcription factor TBX2-A (tbx2-a) (Xenopus laevis (African clawed frog)).